The chain runs to 1080 residues: MGAGEMAEALGEELEREIQRRWEEMDLLSKVLEKNRDGPLFYFLDGPPYASGSIHLGTAWNKIIKDAVNRYKLMRGYRVRLQPGWDCHGLPIEVKVEQEVLSDEIECKKDIEEKVGVDKFVEKCKEFALKHVEIMTEQFKRLGVLMDWDNPYMTLDNEYIEGAWYTLKRAHERGLLDRDVRIVNWCPRCETALADHEVEYKEVEDPSIFVIFPIEDDSDAEVDLPENSALLIWTTTPWTLPANLAVAVHPEEEYVLARAEVDGEEWHLIVADKLKVVLSVVTDSYEIVDSFPGEALEGLRYRPPLWEEVPKLRELHEEDDRVHRVYTAEWVTMEEGTGCVHSAPGHGEEDFELGREVGLPPHCPVAEDGTFTEDGGKYEGLYVRDANEKIVEDLREKGLLAHEDTVEHRYGHCWRCKTPIIYRATEQWFLKVTEVKDEMLEWIERVEWIPEWAGHSRFKSWVENARDWCISRQRYWGIPLPVWECEECGHLEVIGSLSELEAKAVSLPPGEPDLHRPWVDEVVLKCPECGSYMRRVPDVLDVWVDSGVAAWASLGYPRREDEFERWFLKEGRCDPDDPEAGADFITEGHDQTRGWFYSQLGCGVVTFDTCPYRTVLMHGFTLDEEGRKMSKSLGNVVDPMDVVEKYGADTLRWYVLRSNAPWRDMHFSWQDVRDTHRALNVLWNAYRFTKMYSELDEFDPEEHPLEDLEEHLKPEDRWLLSRINSLVEEVTDAFERYHVHEAARALYRFVTEDLSRWYIRLVRERVWLEGDDPEKLAVYAVLHYTFDRLVRLLAPIVPHVAERIYLDYVRAGDDPESVHLTDWPEVDDRWVDEGLEKAMELVRKAAEAALSVRQRAGVKTRWPLRRLFVEVEDPKRLEDLKDVLARVANVKEVELGEEFPEKVPVAEPRPDKIGPEFRSLAGRVIEHVKDRAEEVARSILKDGEYRTELDGEDVVLTEEHVKVTEDLPEGWEAEEFEGGRVYVFVELDEELKSEAWAREVVRRVQEMRKELDLNLEERIRVWIETDEEIAEAVEEHSEYVRGETRADELHVNEGWPEEVDLEREWEVEDRTIRIAVVVSG.

Positions 48–58 match the 'HIGH' region motif; the sequence is PYASGSIHLGT. The 'KMSKS' region motif lies at 628-632; that stretch reads KMSKS. Lysine 631 lines the ATP pocket.

This sequence belongs to the class-I aminoacyl-tRNA synthetase family. IleS type 2 subfamily. In terms of assembly, monomer. Requires Zn(2+) as cofactor.

It localises to the cytoplasm. It carries out the reaction tRNA(Ile) + L-isoleucine + ATP = L-isoleucyl-tRNA(Ile) + AMP + diphosphate. Its function is as follows. Catalyzes the attachment of isoleucine to tRNA(Ile). As IleRS can inadvertently accommodate and process structurally similar amino acids such as valine, to avoid such errors it has two additional distinct tRNA(Ile)-dependent editing activities. One activity is designated as 'pretransfer' editing and involves the hydrolysis of activated Val-AMP. The other activity is designated 'posttransfer' editing and involves deacylation of mischarged Val-tRNA(Ile). The polypeptide is Isoleucine--tRNA ligase (Methanopyrus kandleri (strain AV19 / DSM 6324 / JCM 9639 / NBRC 100938)).